A 342-amino-acid polypeptide reads, in one-letter code: Ketol-acid reductoisomerase (NADP(+)) (342 aa).

The region spanning 2 to 181 is the KARI N-terminal Rossmann domain; it reads VKVYYNGDIK…GGARAGVLET (180 aa). Residues 25–28, R48, S52, and 82–85 contribute to the NADP(+) site; these read YGSQ and DEQQ. H107 is a catalytic residue. G133 contributes to the NADP(+) binding site. Residues 182 to 327 form the KARI C-terminal knotted domain; sequence TFKEETETDL…RKLREMMPFV (146 aa). The Mg(2+) site is built by D190, E194, E226, and E230. Residue S251 participates in substrate binding.

The protein belongs to the ketol-acid reductoisomerase family. Mg(2+) is required as a cofactor.

It catalyses the reaction (2R)-2,3-dihydroxy-3-methylbutanoate + NADP(+) = (2S)-2-acetolactate + NADPH + H(+). The catalysed reaction is (2R,3R)-2,3-dihydroxy-3-methylpentanoate + NADP(+) = (S)-2-ethyl-2-hydroxy-3-oxobutanoate + NADPH + H(+). It participates in amino-acid biosynthesis; L-isoleucine biosynthesis; L-isoleucine from 2-oxobutanoate: step 2/4. The protein operates within amino-acid biosynthesis; L-valine biosynthesis; L-valine from pyruvate: step 2/4. Functionally, involved in the biosynthesis of branched-chain amino acids (BCAA). Catalyzes an alkyl-migration followed by a ketol-acid reduction of (S)-2-acetolactate (S2AL) to yield (R)-2,3-dihydroxy-isovalerate. In the isomerase reaction, S2AL is rearranged via a Mg-dependent methyl migration to produce 3-hydroxy-3-methyl-2-ketobutyrate (HMKB). In the reductase reaction, this 2-ketoacid undergoes a metal-dependent reduction by NADPH to yield (R)-2,3-dihydroxy-isovalerate. The protein is Ketol-acid reductoisomerase (NADP(+)) of Bacillus licheniformis (strain ATCC 14580 / DSM 13 / JCM 2505 / CCUG 7422 / NBRC 12200 / NCIMB 9375 / NCTC 10341 / NRRL NRS-1264 / Gibson 46).